Reading from the N-terminus, the 224-residue chain is Adenylate kinase (224 aa).

10-15 (GSGKGT) contributes to the ATP binding site. Residues 30-59 (ESGAIFRDNIKGGTDLGMKAKAYIDKGDLV) form an NMP region. AMP-binding positions include serine 31, arginine 36, 57–59 (DLV), 85–88 (GFPR), and glutamine 92. The interval 126-165 (GRRLCENDNNHPNNIFIDAIKPNGDKCRVCGGALSSRADD) is LID. Arginine 127 contacts ATP. AMP-binding residues include arginine 162 and arginine 174. Asparagine 211 provides a ligand contact to ATP.

The protein belongs to the adenylate kinase family. In terms of assembly, monomer.

It localises to the cytoplasm. It catalyses the reaction AMP + ATP = 2 ADP. It functions in the pathway purine metabolism; AMP biosynthesis via salvage pathway; AMP from ADP: step 1/1. In terms of biological role, catalyzes the reversible transfer of the terminal phosphate group between ATP and AMP. Plays an important role in cellular energy homeostasis and in adenine nucleotide metabolism. This chain is Adenylate kinase, found in Desulforapulum autotrophicum (strain ATCC 43914 / DSM 3382 / VKM B-1955 / HRM2) (Desulfobacterium autotrophicum).